Here is a 117-residue protein sequence, read N- to C-terminus: Putative pterin-4-alpha-carbinolamine dehydratase (117 aa).

This sequence belongs to the pterin-4-alpha-carbinolamine dehydratase family.

It catalyses the reaction (4aS,6R)-4a-hydroxy-L-erythro-5,6,7,8-tetrahydrobiopterin = (6R)-L-erythro-6,7-dihydrobiopterin + H2O. This is Putative pterin-4-alpha-carbinolamine dehydratase from Aeromonas salmonicida (strain A449).